A 131-amino-acid chain; its full sequence is Small ribosomal subunit protein bS6 (131 aa).

Residues 98-131 form a disordered region; the sequence is EASPMVKAKDERRERRDDFANETADDSDAGDSEE. The span at 104–116 shows a compositional bias: basic and acidic residues; the sequence is KAKDERRERRDDF. Residues 120 to 131 are compositionally biased toward acidic residues; it reads TADDSDAGDSEE.

This sequence belongs to the bacterial ribosomal protein bS6 family.

Functionally, binds together with bS18 to 16S ribosomal RNA. In Enterobacter sp. (strain 638), this protein is Small ribosomal subunit protein bS6.